The sequence spans 71 residues: Brevinin-1HN1 (71 aa).

An N-terminal signal peptide occupies residues 1–22 (MFTSKKPLLLLFFLGTINLSLC). A propeptide spanning residues 23–45 (EQERDADEEERRDDPDERDVEVE) is cleaved from the precursor. Cysteines 65 and 71 form a disulfide.

As to expression, expressed by the skin glands.

It localises to the secreted. Functionally, has antimicrobial activity against Gram-positive bacteria and fungi but has weak or no activity against a range of Gram-negative bacteria except P.faecalis. Active against the Gram-positive bacteria E.faecium 091299 (MIC=19 uM), E.faecalis 981 (MIC=19 uM), S.aureus ATCC 25923 (MIC=1.2 uM), S.carnosus KHS (MIC=4.8 uM), B.licheniformis X39 (MIC=2.4 uM) and R.rhodochrous X15 (MIC=1.2 uM). Active against the Gram-negative bacterium P.faecalis X29 (MIC=4.8 uM), is virtually inactive against E.coli ATCC 25922 (MIC=150 uM) and inactive against P.aeruginosa and S.typhi. Has antifungal activity against C.albicans ATCC 2002 (MIC=2.4 uM) and is also active against the slime mold 090223 (MIC=1.2 uM). Has low hemolytic activity against human erythrocytes (LC(50)=75 uM). In Odorrana hainanensis (Odor frog), this protein is Brevinin-1HN1.